We begin with the raw amino-acid sequence, 358 residues long: Uroporphyrinogen decarboxylase (358 aa).

Residues 29 to 33, Asp-79, Tyr-155, Ser-210, and His-330 each bind substrate; that span reads RQAGR.

Belongs to the uroporphyrinogen decarboxylase family. As to quaternary structure, homodimer.

It is found in the cytoplasm. It catalyses the reaction uroporphyrinogen III + 4 H(+) = coproporphyrinogen III + 4 CO2. Its pathway is porphyrin-containing compound metabolism; protoporphyrin-IX biosynthesis; coproporphyrinogen-III from 5-aminolevulinate: step 4/4. Its function is as follows. Catalyzes the decarboxylation of four acetate groups of uroporphyrinogen-III to yield coproporphyrinogen-III. The chain is Uroporphyrinogen decarboxylase from Bordetella petrii (strain ATCC BAA-461 / DSM 12804 / CCUG 43448).